Reading from the N-terminus, the 328-residue chain is Gonadotropin-releasing hormone receptor (328 aa).

Residues 1-38 (MANSASPEQNQNHCSAINNSIPLMQGNLPTLTLSGKIR) lie on the Extracellular side of the membrane. Asn-18 is a glycosylation site (N-linked (GlcNAc...) asparagine). The chain crosses the membrane as a helical span at residues 39–58 (VTVTFFLFLLSATFNASFLL). Residues 59-77 (KLQKWTQKKEKGKKLSRMK) lie on the Cytoplasmic side of the membrane. The helical transmembrane segment at 78–97 (LLLKHLTLANLLETLIVMPL) threads the bilayer. The Extracellular segment spans residues 98–115 (DGMWNITVQWYAGELLCK). Asn-102 is a glycosylation site (N-linked (GlcNAc...) asparagine). Cysteines 114 and 196 form a disulfide. Residues 116–137 (VLSYLKLFSMYAPAFMMVVISL) traverse the membrane as a helical segment. Topologically, residues 138–164 (DRSLAITRPLALKSNSKVGQSMVGLAW) are cytoplasmic. The helical transmembrane segment at 165–184 (ILSSVFAGPQLYIFRMIHLA) threads the bilayer. Residues 185-212 (DSSGQTKVFSQCVTHCSFSQWWHQAFYN) lie on the Extracellular side of the membrane. The helical transmembrane segment at 213–232 (FFTFSCLFIIPLFIMLICNA) threads the bilayer. The Cytoplasmic portion of the chain corresponds to 233 to 281 (KIIFTLTRVLHQDPHELQLNQSKNNIPRARLKTLKMTVAFATSFTVCWT). The chain crosses the membrane as a helical span at residues 282-300 (PYYVLGIWYWFDPEMLNRL). Over 301-306 (SDPVNH) the chain is Extracellular. Residues 307–326 (FFFLFAFLNPCFDPLIYGYF) traverse the membrane as a helical segment. The Cytoplasmic segment spans residues 327–328 (SL).

This sequence belongs to the G-protein coupled receptor 1 family. Pituitary, ovary, testis, breast and prostate but not in liver and spleen.

The protein localises to the cell membrane. Functionally, receptor for gonadotropin releasing hormone (GnRH) that mediates the action of GnRH to stimulate the secretion of the gonadotropic hormones luteinizing hormone (LH) and follicle-stimulating hormone (FSH). This receptor mediates its action by association with G-proteins that activate a phosphatidylinositol-calcium second messenger system. Isoform 2 may act as an inhibitor of GnRH-R signaling. The chain is Gonadotropin-releasing hormone receptor (GNRHR) from Homo sapiens (Human).